The primary structure comprises 147 residues: Hemoglobin subunit beta (147 aa).

The region spanning 2-147 (HWEDAEKQYI…ISHSLGREYH (146 aa)) is the Globin domain. The heme b site is built by histidine 63 and histidine 92.

Belongs to the globin family. In terms of assembly, heterotetramer of two alpha chains and two beta chains. Red blood cells.

Its function is as follows. Involved in oxygen transport from the lung to the various peripheral tissues. The protein is Hemoglobin subunit beta (HBB) of Lepidosiren paradoxus (South American lungfish).